A 133-amino-acid chain; its full sequence is MNYMPGTASLIEDIDKKHLVLLRDGRTLIGFLRSIDQFANLVLHQTVERIHVGKKYGDIPRGIFVVRGENVVLLGEIDLEKESDTPLQQVSIEEILEEQRVEQQTKLEAEKLKVQALKDRGLSIPRADTLDEY.

The region spanning 5 to 80 is the Sm domain; that stretch reads PGTASLIEDI…VVLLGEIDLE (76 aa). The residue at position 123 (Ser-123) is a Phosphoserine. A Phosphothreonine modification is found at Thr-129.

It belongs to the snRNP Sm proteins family. As to quaternary structure, interacts with SLBP; interaction with SLBP occurs when histone mRNA is being rapidly degraded during the S phase. LSm subunits form a heteromer with a donut shape.

The protein localises to the cytoplasm. It is found in the P-body. Functionally, plays a role in the degradation of histone mRNAs, the only eukaryotic mRNAs that are not polyadenylated. Probably also part of an LSm subunits-containing complex involved in the general process of mRNA degradation. This Homo sapiens (Human) protein is U6 snRNA-associated Sm-like protein LSm1 (LSM1).